A 220-amino-acid chain; its full sequence is Inner membrane-spanning protein YciB (220 aa).

A run of 6 helical transmembrane segments spans residues 20–40 (EVPPLLKLALELGPLLVFFFA), 57–77 (IGAPIFLATALFMGATVIALA), 86–106 (LPIMPLVSGIVVLVFGALTLW), 123–143 (LFGAILLGGLFFGKSLLGYVF), 156–176 (KLTLRWGLFFIFLAVVNEVVW), and 187–207 (FKVWGIMPITIVFTLLQMPLI).

It belongs to the YciB family.

Its subcellular location is the cell inner membrane. Functionally, plays a role in cell envelope biogenesis, maintenance of cell envelope integrity and membrane homeostasis. This is Inner membrane-spanning protein YciB from Brucella anthropi (strain ATCC 49188 / DSM 6882 / CCUG 24695 / JCM 21032 / LMG 3331 / NBRC 15819 / NCTC 12168 / Alc 37) (Ochrobactrum anthropi).